A 1148-amino-acid polypeptide reads, in one-letter code: Phospholipid-transporting ATPase IB (1148 aa).

Residues 1-44 lie on the Cytoplasmic side of the membrane; the sequence is MSRATSVGDQLEAPARIIYLNQSHLNKFCDNRISTAKYSVLTFL. Residue threonine 5 is modified to Phosphothreonine. Residues 45 to 66 form a helical membrane-spanning segment; that stretch reads PRFLYEQIRRAANAFFLFIALL. The Exoplasmic loop segment spans residues 67-71; sequence QQIPD. The helical transmembrane segment at 72–94 threads the bilayer; the sequence is VSPTGRYTTLVPLVIILTIAGIK. The Cytoplasmic segment spans residues 95 to 276; the sequence is EIIEDFKRHK…SNVEKVTNVQ (182 aa). Residues 277 to 298 form a helical membrane-spanning segment; sequence ILVLFGILLVMALVSSVGALFW. Residues 299-323 are Exoplasmic loop-facing; the sequence is NGSHGGKSWYIKKMDTNSDNFGYNL. A helical transmembrane segment spans residues 324–345; that stretch reads LTFIILYNNLIPISLLVTLEVV. Residues 346–837 are Cytoplasmic-facing; that stretch reads KYTQALFINW…GAWSYNRVTK (492 aa). The active-site 4-aspartylphosphate intermediate is aspartate 388. Positions 388, 389, 390, 488, 529, 552, 585, 665, 666, 667, 755, and 761 each coordinate ATP. Aspartate 388 is a Mg(2+) binding site. Threonine 390 is a binding site for Mg(2+). Aspartate 781 lines the Mg(2+) pocket. ATP contacts are provided by asparagine 784 and aspartate 785. Aspartate 785 provides a ligand contact to Mg(2+). The helical transmembrane segment at 838 to 858 threads the bilayer; the sequence is CILYCFYKNVVLYIIELWFAF. Over 859–870 the chain is Exoplasmic loop; sequence VNGFSGQILFER. Residues 871 to 890 traverse the membrane as a helical segment; it reads WCIGLYNVIFTALPPFTLGI. At 891 to 920 the chain is on the cytoplasmic side; it reads FERSCTQESMLRFPQLYRITQNAEGFNTKV. The chain crosses the membrane as a helical span at residues 921–942; sequence FWGHCINALVHSLILFWVPMKA. Over 943–956 the chain is Exoplasmic loop; the sequence is LEHDTPVTSGHATD. Residues 957 to 979 traverse the membrane as a helical segment; sequence YLFVGNIVYTYVVVTVCLKAGLE. Residues 980–985 are Cytoplasmic-facing; the sequence is TTAWTK. The chain crosses the membrane as a helical span at residues 986 to 1006; that stretch reads FSHLAVWGSMLIWLVFFGVYS. Residues 1007 to 1024 are Exoplasmic loop-facing; it reads TIWPTIPIAPDMKGQATM. The helical transmembrane segment at 1025-1049 threads the bilayer; sequence VLSSAYFWLGLFLVPTACLIEDVAW. At 1050–1148 the chain is on the cytoplasmic side; the sequence is RAAKHTCKKT…DTTKENSRKK (99 aa).

The protein belongs to the cation transport ATPase (P-type) (TC 3.A.3) family. Type IV subfamily. Component of a P4-ATPase flippase complex which consists of a catalytic alpha subunit and an accessory beta subunit. Interacts with TMEM30A to form a flippase complex. It depends on Mg(2+) as a cofactor. Found in testis, heart and brain. Most abundant in testis. Also detected in fetal tissues. Expressed in retinal photoreceptor cells; detected in retina outer nuclear layer and inner segment (at protein level).

The protein localises to the membrane. It localises to the golgi apparatus membrane. Its subcellular location is the endosome membrane. It is found in the cell membrane. The protein resides in the photoreceptor outer segment membrane. The protein localises to the photoreceptor inner segment membrane. It carries out the reaction ATP + H2O + phospholipidSide 1 = ADP + phosphate + phospholipidSide 2.. The catalysed reaction is a 1,2-diacyl-sn-glycero-3-phospho-L-serine(out) + ATP + H2O = a 1,2-diacyl-sn-glycero-3-phospho-L-serine(in) + ADP + phosphate + H(+). The enzyme catalyses a 1,2-diacyl-sn-glycero-3-phosphoethanolamine(in) + ATP + H2O = a 1,2-diacyl-sn-glycero-3-phosphoethanolamine(out) + ADP + phosphate + H(+). Functionally, catalytic component of a P4-ATPase flippase complex which catalyzes the hydrolysis of ATP coupled to the transport of aminophospholipids from the outer to the inner leaflet of various membranes and ensures the maintenance of asymmetric distribution of phospholipids. Able to translocate phosphatidylserine, but not phosphatidylcholine. Phospholipid translocation also seems to be implicated in vesicle formation and in uptake of lipid signaling molecules. Reconstituted to liposomes, the ATP8A2:TMEM30A flippase complex predominantly transports phosphatidylserine (PS) and to a lesser extent phosphatidylethanolamine (PE). Phospholipid translocation is not associated with a countertransport of an inorganic ion or other charged substrate from the cytoplasmic side toward the exoplasm in connection with the phosphorylation from ATP. ATP8A2:TMEM30A may be involved in regulation of neurite outgrowth. Proposed to function in the generation and maintenance of phospholipid asymmetry in photoreceptor disk membranes and neuronal axon membranes. May be involved in vesicle trafficking in neuronal cells. Required for normal visual and auditory function; involved in photoreceptor and inner ear spiral ganglion cell survival. This is Phospholipid-transporting ATPase IB from Mus musculus (Mouse).